The chain runs to 199 residues: Fe/S biogenesis protein NfuA (199 aa).

Positions 151 and 154 each coordinate [4Fe-4S] cluster.

It belongs to the NfuA family. As to quaternary structure, homodimer. It depends on [4Fe-4S] cluster as a cofactor.

Functionally, involved in iron-sulfur cluster biogenesis. Binds a 4Fe-4S cluster, can transfer this cluster to apoproteins, and thereby intervenes in the maturation of Fe/S proteins. Could also act as a scaffold/chaperone for damaged Fe/S proteins. The chain is Fe/S biogenesis protein NfuA from Xylella fastidiosa (strain 9a5c).